Reading from the N-terminus, the 311-residue chain is Burkholderia TALE-like protein 3 (311 aa).

One copy of the Cryptic repeat -1 repeat lies at 19 to 50 (LSPFECLKIEKHSGGADALEFISNKYDALTQV). Residues 51–83 (LSRADILKIACHDCAAHALQAVLDYEQVFRQRG) form a Cryptic repeat 0 repeat. 6 Core repeat repeats span residues 84 to 116 (FARADIIKITGNGGGAQALKAVVVHGPTLNECG), 117 to 149 (FSQADIVRIADNIGGAQALKAVLEHGPTLNERD), 150 to 182 (YSGADIVKIAGNGGGARALKAVVMHGPTLCESG), 183 to 215 (YSGADIVKIASNGGGAQALEAVAMHGSTLCERG), 216 to 248 (YCRTDIAKIAGNGGGAQALKAIVMHGPTLCERG), and 249 to 281 (YSRTDIVKIADNNGGAQALKAVFEHGPALTQAG). Residues 282–311 (RSNEDIVNMAARTGAAGQIRKMAAQLSGRQ) form a Cryptic repeat +1 repeat.

This sequence belongs to the transcription activator-like effector (TALE) family. Bat subfamily.

In terms of biological role, does not bind DNA, probably because it has too few core repeats. This is Burkholderia TALE-like protein 3 from Mycetohabitans rhizoxinica (strain DSM 19002 / CIP 109453 / HKI 454) (Paraburkholderia rhizoxinica).